Consider the following 434-residue polypeptide: N-acylneuraminate cytidylyltransferase (434 aa).

Met1 carries the N-acetylmethionine modification. A disordered region spans residues 1–42 (MDSVEKGAATSVSNPRGRPSRGRPPKLQRNSRGGQGRGVEKP). The short motif at 15-31 (PRGRPSRGRPPKLQRNS) is the BC1 motif element. 2 positions are modified to omega-N-methylarginine: Arg37 and Arg52. Positions 52, 62, 111, 120, 122, and 143 each coordinate substrate. A BC2 motif motif is present at residues 200-206 (KRPRRQD). Arg201 is a catalytic residue. Residues 269 to 276 (KEKLKEIK) carry the BC3 motif motif.

Belongs to the CMP-NeuNAc synthase family. Homotetramer; the active enzyme is formed by a dimer of dimers.

It localises to the nucleus. The enzyme catalyses an N-acylneuraminate + CTP = a CMP-N-acyl-beta-neuraminate + diphosphate. Its pathway is amino-sugar metabolism; N-acetylneuraminate metabolism. Functionally, catalyzes the activation of N-acetylneuraminic acid (NeuNAc) to cytidine 5'-monophosphate N-acetylneuraminic acid (CMP-NeuNAc), a substrate required for the addition of sialic acid. Has some activity toward NeuNAc, N-glycolylneuraminic acid (Neu5Gc) or 2-keto-3-deoxy-D-glycero-D-galacto-nononic acid (KDN). In Bos taurus (Bovine), this protein is N-acylneuraminate cytidylyltransferase (CMAS).